The primary structure comprises 316 residues: Pantothenate kinase (316 aa).

95 to 102 (GSVAVGKS) serves as a coordination point for ATP.

Belongs to the prokaryotic pantothenate kinase family.

It localises to the cytoplasm. The enzyme catalyses (R)-pantothenate + ATP = (R)-4'-phosphopantothenate + ADP + H(+). It functions in the pathway cofactor biosynthesis; coenzyme A biosynthesis; CoA from (R)-pantothenate: step 1/5. The sequence is that of Pantothenate kinase from Klebsiella pneumoniae subsp. pneumoniae (strain ATCC 700721 / MGH 78578).